Here is a 406-residue protein sequence, read N- to C-terminus: Histone-lysine N-methyltransferase SUV39H2 (406 aa).

Residues 43–101 (YEVEYLCDYRIEKGVEKFFVKWKGWPESCNTWEPTRNLKCPTLLKQFYSDLYNYFCALK) form the Chromo domain. In terms of domain architecture, Pre-SET spans 185 to 243 (VGCDCSDCFKGKCCPTEAGVLFAYNEHRQIKIPPGRPIYECNSRCKCGPDCPNRVVQKG). 9 residues coordinate Zn(2+): Cys-187, Cys-189, Cys-192, Cys-197, Cys-198, Cys-225, Cys-229, Cys-231, and Cys-235. The SET domain occupies 246–369 (YSLCIFRTDN…AGEELTFDYQ (124 aa)). Residues 257–259 (RGW), Tyr-300, and 326–327 (NH) contribute to the S-adenosyl-L-methionine site. Residues Cys-329, Cys-394, Cys-396, and Cys-401 each contribute to the Zn(2+) site. The Post-SET domain maps to 390-406 (VRIACKCGAATCRGYLN).

This sequence belongs to the class V-like SAM-binding methyltransferase superfamily. Histone-lysine methyltransferase family. Suvar3-9 subfamily.

The protein resides in the nucleus. It is found in the chromosome. The protein localises to the centromere. It catalyses the reaction L-lysyl(9)-[histone H3] + 3 S-adenosyl-L-methionine = N(6),N(6),N(6)-trimethyl-L-lysyl(9)-[histone H3] + 3 S-adenosyl-L-homocysteine + 3 H(+). Its function is as follows. Histone methyltransferase that specifically trimethylates 'Lys-9' of histone H3 using monomethylated H3 'Lys-9' as substrate. H3 'Lys-9' trimethylation represents a specific tag for epigenetic transcriptional repression by recruiting HP1 (CBX1, CBX3 and/or CBX5) proteins to methylated histones. Mainly functions in heterochromatin regions, thereby playing a central role in the establishment of constitutive heterochromatin at pericentric and telomere regions. H3 'Lys-9' trimethylation is also required to direct DNA methylation at pericentric repeats. SUV39H1 is targeted to histone H3 via its interaction with RB1 and is involved in many processes. This chain is Histone-lysine N-methyltransferase SUV39H2 (suv39h2), found in Xenopus tropicalis (Western clawed frog).